Here is a 428-residue protein sequence, read N- to C-terminus: Histone deacetylase 3 (428 aa).

Positions 3-316 are histone deacetylase; sequence NRTSYFYDPD…WTFETSLLLE (314 aa). Positions 17, 21, and 25 each coordinate 1D-myo-inositol 1,4,5,6-tetrakisphosphate. His-135 is an active-site residue. Positions 170, 172, and 259 each coordinate Zn(2+). Residue Arg-265 coordinates 1D-myo-inositol 1,4,5,6-tetrakisphosphate. The disordered stretch occupies residues 385 to 428; sequence LNYERNDEPDPDERGAEENYTRPEAANEFYDGDHDNDKESDVEI. Composition is skewed to basic and acidic residues over residues 386–405 and 415–428; these read NYERNDEPDPDERGAEENYT and DGDHDNDKESDVEI.

The protein belongs to the histone deacetylase family. HD type 1 subfamily.

It is found in the nucleus. Its subcellular location is the chromosome. The protein resides in the cytoplasm. It localises to the cytosol. It catalyses the reaction N(6)-acetyl-L-lysyl-[histone] + H2O = L-lysyl-[histone] + acetate. Inositol tetraphosphate (1D-myo-inositol 1,4,5,6-tetrakisphosphate) promotes the histone deacetylase activity by acting as an intermolecular glue between hdac3 and N-Cor repressor complex components. In terms of biological role, responsible for the deacetylation of lysine residues on the N-terminal part of the core histones (H2A, H2B, H3 and H4). Histone deacetylation gives a tag for epigenetic repression and plays an important role in transcriptional regulation, cell cycle progression and developmental events. Histone deacetylases act via the formation of large multiprotein complexes, such as N-Cor repressor complex, which activate the histone deacetylase activity. May play a role in the regulation of the circadian clock in a deacetylase activity-independent manner. The chain is Histone deacetylase 3 (hdac3) from Tetraodon nigroviridis (Spotted green pufferfish).